The following is a 271-amino-acid chain: Elongation factor Ts (271 aa).

Residues 76-79 (TDFV) are involved in Mg(2+) ion dislocation from EF-Tu.

The protein belongs to the EF-Ts family.

It localises to the cytoplasm. Functionally, associates with the EF-Tu.GDP complex and induces the exchange of GDP to GTP. It remains bound to the aminoacyl-tRNA.EF-Tu.GTP complex up to the GTP hydrolysis stage on the ribosome. This chain is Elongation factor Ts, found in Mycolicibacterium gilvum (strain PYR-GCK) (Mycobacterium gilvum (strain PYR-GCK)).